The primary structure comprises 735 residues: NAD(P)H-quinone oxidoreductase subunit 5, chloroplastic (735 aa).

16 helical membrane passes run 9–29 (WIIP…LLLF), 40–60 (WAFP…DLSI), 89–109 (IDSL…FVLI), 125–145 (FAYM…CNLI), 147–167 (IYIF…FWFT), 184–204 (IGDF…GSFE), 219–239 (NEVH…GAVA), 258–278 (TPIS…FLVA), 280–300 (LLPL…IGII), 327–347 (LGYM…FHLI), 354–374 (ALLF…VGYS), 396–416 (IAFL…CFWS), 425–445 (WLYS…TAFY), 540–560 (LFPM…AIPF), 600–620 (FSVS…KPFY), and 714–734 (FYLL…YFIL).

The protein belongs to the complex I subunit 5 family. In terms of assembly, NDH is composed of at least 16 different subunits, 5 of which are encoded in the nucleus.

It localises to the plastid. The protein resides in the chloroplast thylakoid membrane. It carries out the reaction a plastoquinone + NADH + (n+1) H(+)(in) = a plastoquinol + NAD(+) + n H(+)(out). The catalysed reaction is a plastoquinone + NADPH + (n+1) H(+)(in) = a plastoquinol + NADP(+) + n H(+)(out). Functionally, NDH shuttles electrons from NAD(P)H:plastoquinone, via FMN and iron-sulfur (Fe-S) centers, to quinones in the photosynthetic chain and possibly in a chloroplast respiratory chain. The immediate electron acceptor for the enzyme in this species is believed to be plastoquinone. Couples the redox reaction to proton translocation, and thus conserves the redox energy in a proton gradient. The sequence is that of NAD(P)H-quinone oxidoreductase subunit 5, chloroplastic (ndhF) from Gossypium hirsutum (Upland cotton).